The chain runs to 544 residues: BTB/POZ domain-containing protein At2g13690 (544 aa).

Disordered stretches follow at residues 34 to 66 (ASPD…PQSS) and 82 to 111 (LSPG…EEDD). The span at 37–55 (DTRSISSRNHIPAKSQQQR) shows a compositional bias: polar residues. Low complexity predominate over residues 93–103 (DPTVTTMQETE). In terms of domain architecture, BTB spans 142 to 225 (YDARLSLKGR…MFEESNVIIK (84 aa)).

It participates in protein modification; protein ubiquitination. May act as a substrate-specific adapter of an E3 ubiquitin-protein ligase complex (CUL3-RBX1-BTB) which mediates the ubiquitination and subsequent proteasomal degradation of target proteins. The chain is BTB/POZ domain-containing protein At2g13690 (PRL1-IFG) from Arabidopsis thaliana (Mouse-ear cress).